A 375-amino-acid chain; its full sequence is POU domain, class 3, transcription factor 1-A (375 aa).

Disordered regions lie at residues 1-29 (MAAT…RMHQ), 67-138 (PASD…HQPL), and 151-200 (MLGP…PSSD). Polar residues-rich tracts occupy residues 107–117 (VHQQSPSSHAW), 129–138 (SPSSNSHQPL), and 151–160 (MLGPQASSLH). Residues 162-177 (SMRDPLHDDPGVHDTQ) are compositionally biased toward basic and acidic residues. Residues 194–268 (EDAPSSDDLE…LLNKWLEETD (75 aa)) form the POU-specific domain. The segment at residues 286–345 (KRKKRTSIEVGVKGALENHFLKCPKPSAHEITSLADSLQLEKEVVRVWFCNRRQKEKRMT) is a DNA-binding region (homeobox).

Belongs to the POU transcription factor family. Class-3 subfamily. In embryos at the neural fold stage, localized primarily in the anterior neural plate, and localized mostly in the anterior region of the nerve cord of neurula stage embryos. In tailbud stages, expressed predominantly in the eye and brain, with weak expression along the length of the nerve cord. In adults, expressed in skin and brain.

It localises to the nucleus. Functionally, acts as a transcription factor. May play a role in neuronal differentiation. In Xenopus laevis (African clawed frog), this protein is POU domain, class 3, transcription factor 1-A (pou3f1-a).